We begin with the raw amino-acid sequence, 230 residues long: NAD-dependent protein deacylase 1 (230 aa).

Positions 1–226 (MESGIPTYRE…SHLSAFLSRE (226 aa)) constitute a Deacetylase sirtuin-type domain. Tyr41 and Arg44 together coordinate substrate. Residue 75–78 (QNID) participates in NAD(+) binding. His93 acts as the Proton acceptor in catalysis. 4 residues coordinate Zn(2+): Cys101, Cys104, Cys128, and Cys131. NAD(+) contacts are provided by residues 168 to 170 (GTS), 194 to 196 (NTV), and Ala212.

It belongs to the sirtuin family. Class III subfamily. Requires Zn(2+) as cofactor.

The protein resides in the cytoplasm. The catalysed reaction is N(6)-acetyl-L-lysyl-[protein] + NAD(+) + H2O = 2''-O-acetyl-ADP-D-ribose + nicotinamide + L-lysyl-[protein]. It catalyses the reaction N(6)-succinyl-L-lysyl-[protein] + NAD(+) + H2O = 2''-O-succinyl-ADP-D-ribose + nicotinamide + L-lysyl-[protein]. Functionally, NAD-dependent lysine deacetylase and desuccinylase that specifically removes acetyl and succinyl groups on target proteins. Modulates the activities of several proteins which are inactive in their acylated form. This chain is NAD-dependent protein deacylase 1, found in Pseudomonas syringae pv. tomato (strain ATCC BAA-871 / DC3000).